A 181-amino-acid polypeptide reads, in one-letter code: Crossover junction endodeoxyribonuclease RuvC (181 aa).

Active-site residues include D7, E67, and D139. D7, E67, and D139 together coordinate Mg(2+).

Belongs to the RuvC family. As to quaternary structure, homodimer which binds Holliday junction (HJ) DNA. The HJ becomes 2-fold symmetrical on binding to RuvC with unstacked arms; it has a different conformation from HJ DNA in complex with RuvA. In the full resolvosome a probable DNA-RuvA(4)-RuvB(12)-RuvC(2) complex forms which resolves the HJ. It depends on Mg(2+) as a cofactor.

It is found in the cytoplasm. It carries out the reaction Endonucleolytic cleavage at a junction such as a reciprocal single-stranded crossover between two homologous DNA duplexes (Holliday junction).. In terms of biological role, the RuvA-RuvB-RuvC complex processes Holliday junction (HJ) DNA during genetic recombination and DNA repair. Endonuclease that resolves HJ intermediates. Cleaves cruciform DNA by making single-stranded nicks across the HJ at symmetrical positions within the homologous arms, yielding a 5'-phosphate and a 3'-hydroxyl group; requires a central core of homology in the junction. The consensus cleavage sequence is 5'-(A/T)TT(C/G)-3'. Cleavage occurs on the 3'-side of the TT dinucleotide at the point of strand exchange. HJ branch migration catalyzed by RuvA-RuvB allows RuvC to scan DNA until it finds its consensus sequence, where it cleaves and resolves the cruciform DNA. This is Crossover junction endodeoxyribonuclease RuvC from Ralstonia nicotianae (strain ATCC BAA-1114 / GMI1000) (Ralstonia solanacearum).